A 153-amino-acid polypeptide reads, in one-letter code: Deoxyuridine 5'-triphosphate nucleotidohydrolase (153 aa).

Residues 71–73 (RSG), Asn84, 88–90 (LID), and Met98 each bind substrate.

The protein belongs to the dUTPase family. Requires Mg(2+) as cofactor.

The catalysed reaction is dUTP + H2O = dUMP + diphosphate + H(+). It participates in pyrimidine metabolism; dUMP biosynthesis; dUMP from dCTP (dUTP route): step 2/2. Functionally, this enzyme is involved in nucleotide metabolism: it produces dUMP, the immediate precursor of thymidine nucleotides and it decreases the intracellular concentration of dUTP so that uracil cannot be incorporated into DNA. This is Deoxyuridine 5'-triphosphate nucleotidohydrolase from Wigglesworthia glossinidia brevipalpis.